The sequence spans 189 residues: GTP cyclohydrolase 1 (189 aa).

Cys78, His81, and Cys150 together coordinate Zn(2+).

The protein belongs to the GTP cyclohydrolase I family. As to quaternary structure, toroid-shaped homodecamer, composed of two pentamers of five dimers.

It carries out the reaction GTP + H2O = 7,8-dihydroneopterin 3'-triphosphate + formate + H(+). It functions in the pathway cofactor biosynthesis; 7,8-dihydroneopterin triphosphate biosynthesis; 7,8-dihydroneopterin triphosphate from GTP: step 1/1. The sequence is that of GTP cyclohydrolase 1 from Bacillus pumilus (strain SAFR-032).